The chain runs to 333 residues: Putative F-box protein At4g11580 (333 aa).

Residues 11 to 58 enclose the F-box domain; that stretch reads VSEWADLNKDILELIFNKLDVMDITMGASRVCISWFLASHNKTLWNTV.

In Arabidopsis thaliana (Mouse-ear cress), this protein is Putative F-box protein At4g11580.